A 755-amino-acid polypeptide reads, in one-letter code: 3-isopropylmalate dehydratase (755 aa).

Residues cysteine 353, cysteine 413, and cysteine 416 each contribute to the [4Fe-4S] cluster site. Disordered regions lie at residues 427–446 (GERCASTSNRNFEGRQGAGG), 471–493 (LTPAQQDRPASPTPKKIETELEP), and 510–529 (DAPATGASPPSPAPSDAAGM). Residues 510–528 (DAPATGASPPSPAPSDAAG) are compositionally biased toward low complexity.

This sequence belongs to the aconitase/IPM isomerase family. As to quaternary structure, monomer. Requires [4Fe-4S] cluster as cofactor.

It carries out the reaction (2R,3S)-3-isopropylmalate = (2S)-2-isopropylmalate. It participates in amino-acid biosynthesis; L-leucine biosynthesis; L-leucine from 3-methyl-2-oxobutanoate: step 2/4. In terms of biological role, catalyzes the isomerization between 2-isopropylmalate and 3-isopropylmalate, via the formation of 2-isopropylmaleate. The protein is 3-isopropylmalate dehydratase (LEUA) of Rhizomucor pusillus.